The following is a 2070-amino-acid chain: Multiple PDZ domain protein (2070 aa).

The region spanning 1-63 (MLEAIDKNRA…SVQQLKDQVN (63 aa)) is the L27 domain. The 88-residue stretch at 137–224 (VFELLKPPSG…TVQLVIARGS (88 aa)) folds into the PDZ 1 domain. Phosphoserine is present on Ser230. PDZ domains follow at residues 257-337 (TIEL…ARGA) and 377-463 (DVEL…MRRG). Ser483 carries the phosphoserine modification. 2 PDZ domains span residues 553 to 634 (VAHV…CRRT) and 700 to 786 (HIEL…VAKP). Phosphoserine is present on residues Ser790 and Ser1078. Residues 1008-1089 (TINIAKGNSS…IGPDIKITYV (82 aa)) enclose the PDZ 6 domain. The segment at 1121 to 1140 (DIPELPEREEGEGEESELQN) is disordered. Residues 1151 to 1243 (RVELWREPSK…PVVFMVQSII (93 aa)) enclose the PDZ 7 domain. Arg1170 is subject to Omega-N-methylarginine. Residues 1278-1324 (ADKAPSQSESEPEKAPLCSVPPPPPSAFAEMGSDHTQSSASKISQDV) are disordered. Over residues 1311–1321 (DHTQSSASKIS) the composition is skewed to polar residues. PDZ domains lie at 1350–1433 (MIEL…IRNK) and 1483–1564 (HLEL…HAEN). A disordered region spans residues 1567-1612 (SQAVPSAAGAASGEKKNSSQSLMVPQSGSPEPESIRNTSRSSTPAI). Over residues 1584-1610 (SSQSLMVPQSGSPEPESIRNTSRSSTP) the composition is skewed to polar residues. PDZ domains are found at residues 1629–1712 (TIEI…YRDE) and 1725–1807 (TIEL…GRIK). 2 positions are modified to phosphoserine: Ser1818 and Ser1824. 2 consecutive PDZ domains span residues 1862 to 1948 (TVEM…VAGG) and 1987 to 2070 (SITL…MVLS).

Interacts with CLDN5, DLG4, GRIN1, F11R/JAM, CLDN1, NG2, CRB1, MPP4 and PALS1. Interacts with HTR2A, HTR2B, HTR2C, PLEKHA1/TAPP1, PLEKHA2/TAPP2, CXADR, SYNGAP1, CAMK2A and CAMK2B. Interacts with FAT4 (via cytoplasmic domain). Interacts with DLL1. In terms of assembly, (Microbial infection) Interacts with human adenovirus type 9 E4-ORF1 protein. As to quaternary structure, (Microbial infection) Interacts with human papillomavirus 18/HPV18 protein E6. Expressed in heart, brain, placenta, liver, skeletal muscle, kidney and pancreas.

The protein localises to the cell membrane. Its subcellular location is the apical cell membrane. It is found in the postsynaptic density. The protein resides in the cell projection. It localises to the dendrite. The protein localises to the cell junction. Its subcellular location is the tight junction. It is found in the synapse. The protein resides in the synaptosome. Member of the NMDAR signaling complex that may play a role in control of AMPAR potentiation and synaptic plasticity in excitatory synapses. Promotes clustering of HT2RC at the cell surface. In Homo sapiens (Human), this protein is Multiple PDZ domain protein (MPDZ).